A 428-amino-acid chain; its full sequence is Phosphoribosylamine--glycine ligase (428 aa).

The 207-residue stretch at 107–313 (KQVMKTYNIP…LVNVIESLLD (207 aa)) folds into the ATP-grasp domain. 133–194 (VEAEGVPIVI…EEYLEGEELS (62 aa)) contacts ATP. 2 residues coordinate Mg(2+): glutamate 283 and asparagine 285.

Belongs to the GARS family. Requires Mg(2+) as cofactor. Mn(2+) is required as a cofactor.

The enzyme catalyses 5-phospho-beta-D-ribosylamine + glycine + ATP = N(1)-(5-phospho-beta-D-ribosyl)glycinamide + ADP + phosphate + H(+). The protein operates within purine metabolism; IMP biosynthesis via de novo pathway; N(1)-(5-phospho-D-ribosyl)glycinamide from 5-phospho-alpha-D-ribose 1-diphosphate: step 2/2. This chain is Phosphoribosylamine--glycine ligase, found in Halalkalibacterium halodurans (strain ATCC BAA-125 / DSM 18197 / FERM 7344 / JCM 9153 / C-125) (Bacillus halodurans).